We begin with the raw amino-acid sequence, 786 residues long: MAKKSAIKRKVKAPESINEQASVSEQSENEEDEDLLQAVKDPGEDTTDDEGIDQEYQSDTSDDLLFESDEEGNYLGRKEASSGEDEQGEEDDNDDEEEEDEDEEESGSSDDDAKDDQPSGSKATLSKTTGDSSNIAVAIPPRRDPSKPEYENSDTSDEEDIRNTVGNIPMHWYDEYKHIGYDWDAKKIIKPPKGDQIDDFLRKIEDPDFWRTVKDPQTGQEVLLTDEDIALIKRVNSARIPNPEHNEYEPWIEWFSSQVEKMPIKNVPDHKRSFLPSVSEKKKVSRMVHALKMGWMKTTEEVERDKQQKRGPKFYMLWETDTGREHIRRIHDPVSAPKRDLPGHAESYNPPPEYLFDAKEMKEWLKYKDEPHKRKLHFMPQKFKSLREVPAYSRFLRERFLRCLDLYLCPRAKRVKLNIDAEYLIPKLPSPRDLQPFPTVESLVYRGHTDLVRSVSVEPKGEYIVSGSDDKTVKIWEIATGRCIRTIETNDVVRCVAWCPNAKLSIIAVATGTRLLLINPKVGDKLLVKKTDDLLAEAPSSDVIESERIKTAVQWSNAEPEEQEKGVRVVITHFKPIRQVTWHGRGDYLATVMPEGANRSALIHQLSKRRSQIPFSKSKGLIQCVLFHPVKPCFFVATQHNIRIYDLVKQELIKKLLTNSKWISGMSIHPKGDNLLVSTYDKKMLWFDLDLSTKPYQTMRLHRNAVRSIAFHLRYPLFASGSDDQAVIVSHGMVYNDLLQNPLIVPLKKLQTHEKRDEFGVLDVNWHPVQPWIFSTGADCTIRLYT.

The span at 1-11 (MAKKSAIKRKV) shows a compositional bias: basic residues. The disordered stretch occupies residues 1–161 (MAKKSAIKRK…NSDTSDEEDI (161 aa)). Positions 17–26 (INEQASVSEQ) are enriched in polar residues. Acidic residues-rich tracts occupy residues 44-53 (EDTTDDEGID), 60-72 (TSDD…DEEG), and 82-114 (SGED…DDAK). The segment covering 122 to 135 (KATLSKTTGDSSNI) has biased composition (polar residues). Positions 141–150 (PRRDPSKPEY) are enriched in basic and acidic residues. The span at 151–160 (ENSDTSDEED) shows a compositional bias: acidic residues. 7 WD repeats span residues 447 to 488 (GHTD…RTIE), 490 to 528 (NDVV…KLLV), 572 to 614 (THFK…SQIP), 617 to 655 (KSKG…LIKK), 658 to 697 (TNSK…KPYQ), 701 to 740 (LHRN…DLLQ), and 756 to 786 (RDEF…RLYT).

Belongs to the WD repeat BOP1/ERB1 family.

The protein localises to the nucleus. The protein resides in the nucleolus. It is found in the nucleoplasm. In terms of biological role, required for maturation of ribosomal RNAs and formation of the large ribosomal subunit. This is Ribosome biogenesis protein BOP1 homolog from Drosophila grimshawi (Hawaiian fruit fly).